Reading from the N-terminus, the 227-residue chain is Casparian strip membrane protein 2 (227 aa).

Over 1–59 (MSSTSEATVIHMDGAAGKTPATAVPPPPPPAPTAPVQQQRKAGGVPFLLRSGAEGFRRC) the chain is Cytoplasmic. A disordered region spans residues 17-37 (GKTPATAVPPPPPPAPTAPVQ). Residues 23-33 (AVPPPPPPAPT) show a composition bias toward pro residues. A helical membrane pass occupies residues 60-80 (MALLDLLLRVAAMGPTLAAAI). Residues 81 to 107 (STGTSDETLSVFTHYFQFRARFDDFSA) lie on the Extracellular side of the membrane. The chain crosses the membrane as a helical span at residues 108–128 (FTFFMVANAVAAGYLLMSLPF). Residues 129–149 (SAFGVIRPKATSVRLLLLICD) are Cytoplasmic-facing. The chain crosses the membrane as a helical span at residues 150 to 170 (TIMVVLVTAAASAAAAIVYVA). Over 171 to 197 (HEGNRRANWVPICMQFHGFCKRTSGAV) the chain is Extracellular. A helical membrane pass occupies residues 198 to 218 (VASFLAVLIFILLVFLGACAI). The Cytoplasmic portion of the chain corresponds to 219–227 (RRRHTTTKH).

The protein belongs to the Casparian strip membrane proteins (CASP) family. As to quaternary structure, homodimer and heterodimers.

The protein resides in the cell membrane. In terms of biological role, regulates membrane-cell wall junctions and localized cell wall deposition. Required for establishment of the Casparian strip membrane domain (CSD) and the subsequent formation of Casparian strips, a cell wall modification of the root endodermis that determines an apoplastic barrier between the intraorganismal apoplasm and the extraorganismal apoplasm and prevents lateral diffusion. The protein is Casparian strip membrane protein 2 of Brachypodium distachyon (Purple false brome).